A 1059-amino-acid polypeptide reads, in one-letter code: Ubiquitin carboxyl-terminal hydrolase 36 (1059 aa).

Disordered regions lie at residues 24 to 49 and 94 to 148; these read VGNG…DSEM and SNNN…KPKR. Residues 94–123 are compositionally biased toward low complexity; the sequence is SNNNNSSSCNGSNFGNSKVVGANGHDNGNN. A compositionally biased stretch (polar residues) spans 130–139; that stretch reads QSESTQSGPS. One can recognise a USP domain in the interval 171-479; sequence TGMINVGNTC…NAYIMFYELD (309 aa). Cys180 serves as the catalytic Nucleophile. The active-site Proton acceptor is the His438. The disordered stretch occupies residues 505–673; that stretch reads TVSSSSPTHT…KTPLKSSVKT (169 aa). A phosphoserine mark is found at Ser508 and Ser510. Positions 528-539 are enriched in polar residues; that stretch reads GYSNGHATGSSN. Low complexity-rich tracts occupy residues 540 to 560, 592 to 611, and 633 to 647; these read AQKT…NGLQ, NGNK…KSVN, and ATAT…RPTA. Basic and acidic residues predominate over residues 655–664; that stretch reads MTEDSSDKPK. Residues Thr673 and Thr682 each carry the phosphothreonine modification. 3 disordered regions span residues 687–893, 926–998, and 1012–1059; these read LVPY…EAST, KELV…RYHN, and KYNR…QSSS. 2 positions are modified to phosphoserine: Ser692 and Ser694. Composition is skewed to low complexity over residues 729–739 and 752–765; these read TKTNGGSLTNG and SSSS…ASAA. A Phosphoserine modification is found at Ser766. Acidic residues predominate over residues 766–776; that stretch reads SDDEDADEEEE. Residues 779 to 795 are compositionally biased toward polar residues; it reads KLTNGWQPQKQSQSLTQ. Residues 799–808 are compositionally biased toward pro residues; sequence PPSPKTPPSP. Phosphoserine is present on Ser801. Position 804 is a phosphothreonine (Thr804). Ser807 is modified (phosphoserine). Over residues 825–839 the composition is skewed to acidic residues; the sequence is DNEDEDDDDDEDEEE. Composition is skewed to polar residues over residues 842–862 and 876–893; these read QVVS…STTP and KSQQ…EAST. Residues Thr846 and Thr861 each carry the phosphothreonine modification. Residues 926–940 show a composition bias toward basic and acidic residues; that stretch reads KELVAEAREQRQHDH. Residues 1048–1059 are compositionally biased toward low complexity; it reads QQQQQQSQQSSS.

Belongs to the peptidase C19 family. As to quaternary structure, interacts with atms/PAF1, but not with CycT.

It is found in the nucleus. The protein resides in the nucleolus. It carries out the reaction Thiol-dependent hydrolysis of ester, thioester, amide, peptide and isopeptide bonds formed by the C-terminal Gly of ubiquitin (a 76-residue protein attached to proteins as an intracellular targeting signal).. Functionally, required for maintaining multiple types of adult stem cells, including male and female germline, epithelial follicle cell and intestinal stem cells. May function as a transcriptional repressor by continually deubiquiting histone H2B at the promoters of genes critical for cellular differentiation, thereby preventing histone H3 'Lys-4' trimethylation (H3K4). Controls selective autophagy activation by ubiquitinated proteins. The protein is Ubiquitin carboxyl-terminal hydrolase 36 (Usp36) of Drosophila pseudoobscura pseudoobscura (Fruit fly).